The chain runs to 437 residues: tRNA(Ile2) 2-agmatinylcytidine synthetase TiaS (437 aa).

It belongs to the TiaS family.

It is found in the cytoplasm. It carries out the reaction cytidine(34) in tRNA(Ile2) + agmatine + ATP + H2O = 2-agmatinylcytidine(34) in tRNA(Ile2) + AMP + 2 phosphate + 2 H(+). ATP-dependent agmatine transferase that catalyzes the formation of 2-agmatinylcytidine (agm2C) at the wobble position (C34) of tRNA(Ile2), converting the codon specificity from AUG to AUA. The polypeptide is tRNA(Ile2) 2-agmatinylcytidine synthetase TiaS (Thermoplasma volcanium (strain ATCC 51530 / DSM 4299 / JCM 9571 / NBRC 15438 / GSS1)).